The sequence spans 136 residues: Large ribosomal subunit protein uL16c (136 aa).

The segment at 1 to 20 (MLSPKRTRFRKQHRGRMKGK) is disordered.

The protein belongs to the universal ribosomal protein uL16 family. Part of the 50S ribosomal subunit.

The protein localises to the plastid. It is found in the chloroplast. The polypeptide is Large ribosomal subunit protein uL16c (Agrostis stolonifera (Creeping bentgrass)).